A 120-amino-acid chain; its full sequence is Large ribosomal subunit protein bL20 (120 aa).

This sequence belongs to the bacterial ribosomal protein bL20 family.

In terms of biological role, binds directly to 23S ribosomal RNA and is necessary for the in vitro assembly process of the 50S ribosomal subunit. It is not involved in the protein synthesizing functions of that subunit. This is Large ribosomal subunit protein bL20 from Mesoplasma florum (strain ATCC 33453 / NBRC 100688 / NCTC 11704 / L1) (Acholeplasma florum).